The following is a 509-amino-acid chain: ATP synthase subunit alpha (509 aa).

Residue 169–176 (GDRQTGKT) participates in ATP binding.

This sequence belongs to the ATPase alpha/beta chains family. As to quaternary structure, F-type ATPases have 2 components, CF(1) - the catalytic core - and CF(0) - the membrane proton channel. CF(1) has five subunits: alpha(3), beta(3), gamma(1), delta(1), epsilon(1). CF(0) has three main subunits: a(1), b(2) and c(9-12). The alpha and beta chains form an alternating ring which encloses part of the gamma chain. CF(1) is attached to CF(0) by a central stalk formed by the gamma and epsilon chains, while a peripheral stalk is formed by the delta and b chains.

The protein resides in the cell inner membrane. The enzyme catalyses ATP + H2O + 4 H(+)(in) = ADP + phosphate + 5 H(+)(out). Functionally, produces ATP from ADP in the presence of a proton gradient across the membrane. The alpha chain is a regulatory subunit. The protein is ATP synthase subunit alpha of Rhizobium etli (strain CIAT 652).